Here is a 412-residue protein sequence, read N- to C-terminus: uncharacterized protein (412 aa).

The first 21 residues, 1–21 (MIIPMLRILLIVLFVLNLVTS), serve as a signal peptide directing secretion. 3 disordered regions span residues 85-134 (QPPA…STTT), 250-294 (STTE…TPGT), and 327-357 (VELGEGDDDEENDDDSSEEEETKPPARHVRE). Over residues 88 to 105 (ASLTSLPAAPPSAQVAPP) the composition is skewed to low complexity. A compositionally biased stretch (polar residues) spans 124-134 (TPQASISSTTT). Composition is skewed to low complexity over residues 250–259 (STTENTTEQS) and 266–293 (TTSTYSTTTTAPVNTTSAPTTTHLGTPG). The span at 330-347 (GEGDDDEENDDDSSEEEE) shows a compositional bias: acidic residues. A compositionally biased stretch (basic and acidic residues) spans 348-357 (TKPPARHVRE). The 38-residue stretch at 371-408 (CDEEEDDKGKICKLWAAGGLCGTHKPTMFLFCRKTCLC) folds into the ShKT domain.

This is an uncharacterized protein from Caenorhabditis elegans.